Here is a 93-residue protein sequence, read N- to C-terminus: MLKPLGDRVVLKVEEKEQKVGGFVIAGNGQAATKTAEVVAVGQGIRTLNGELVSLSVKEGEKVLVENHAGVEVKDGDEAYLLVSEANILAVVE.

It belongs to the GroES chaperonin family. As to quaternary structure, heptamer of 7 subunits arranged in a ring. Interacts with the chaperonin GroEL.

It is found in the cytoplasm. Together with the chaperonin GroEL, plays an essential role in assisting protein folding. The GroEL-GroES system forms a nano-cage that allows encapsulation of the non-native substrate proteins and provides a physical environment optimized to promote and accelerate protein folding. GroES binds to the apical surface of the GroEL ring, thereby capping the opening of the GroEL channel. The protein is Co-chaperonin GroES of Streptococcus sanguinis.